The chain runs to 147 residues: Phosphoribosyl-AMP cyclohydrolase (147 aa).

Asp91 lines the Mg(2+) pocket. Cys92 lines the Zn(2+) pocket. Mg(2+)-binding residues include Asp93 and Asp95. Positions 109 and 116 each coordinate Zn(2+).

Belongs to the PRA-CH family. Homodimer. It depends on Mg(2+) as a cofactor. Zn(2+) is required as a cofactor.

The protein localises to the cytoplasm. The catalysed reaction is 1-(5-phospho-beta-D-ribosyl)-5'-AMP + H2O = 1-(5-phospho-beta-D-ribosyl)-5-[(5-phospho-beta-D-ribosylamino)methylideneamino]imidazole-4-carboxamide. It participates in amino-acid biosynthesis; L-histidine biosynthesis; L-histidine from 5-phospho-alpha-D-ribose 1-diphosphate: step 3/9. Catalyzes the hydrolysis of the adenine ring of phosphoribosyl-AMP. In Rhodopseudomonas palustris (strain BisA53), this protein is Phosphoribosyl-AMP cyclohydrolase.